The chain runs to 557 residues: Arginine--tRNA ligase (557 aa).

The short motif at 132 to 142 (ANPTGDLHLGH) is the 'HIGH' region element.

This sequence belongs to the class-I aminoacyl-tRNA synthetase family. In terms of assembly, monomer.

It is found in the cytoplasm. It carries out the reaction tRNA(Arg) + L-arginine + ATP = L-arginyl-tRNA(Arg) + AMP + diphosphate. The sequence is that of Arginine--tRNA ligase from Bacillus pumilus (strain SAFR-032).